The chain runs to 373 residues: uncharacterized protein (373 aa).

This is an uncharacterized protein from Methanocaldococcus jannaschii (strain ATCC 43067 / DSM 2661 / JAL-1 / JCM 10045 / NBRC 100440) (Methanococcus jannaschii).